The primary structure comprises 382 residues: uncharacterized protein (382 aa).

The next 12 helical transmembrane spans lie at 14–34, 45–65, 75–95, 102–122, 131–151, 157–177, 204–224, 231–251, 270–290, 291–311, 325–345, and 349–369; these read GLLL…LWLA, MVSS…GYLI, YLAS…VGFW, FIAG…LMCS, LLAA…LLVS, LLHV…PLLF, LGVN…GLMP, GMAN…GILG, VQVF…AMAP, ALFI…AWAC, ALLL…AMLM, and SDNL…LMLL.

This sequence belongs to the major facilitator superfamily. YcaD (TC 2.A.1.26) family.

The protein resides in the cell inner membrane. This is an uncharacterized protein from Salmonella paratyphi A (strain ATCC 9150 / SARB42).